The sequence spans 818 residues: FAD-dependent monooxygenase anuJ (818 aa).

FAD-binding residues include Glu46, Ala60, Arg122, Asp329, and Gly342. 3 helical membrane-spanning segments follow: residues Val471–Val491, Phe539–Val559, and Leu571–Ile591. Residue Asn614 is glycosylated (N-linked (GlcNAc...) asparagine). Helical transmembrane passes span Ile621–Val641 and Ala647–Ala667. Asn683 carries an N-linked (GlcNAc...) asparagine glycan. 2 consecutive transmembrane segments (helical) span residues Trp743–Leu763 and Phe778–Leu798.

This sequence belongs to the paxM FAD-dependent monooxygenase family.

It localises to the membrane. Functionally, highly reducing polyketide synthase; part of the gene cluster that mediates the biosynthesis of annullatin D, an alkylated aromatic polyketide with a fused dihydrobenzofuran lactone ring system that exhibits potent agonistic activities toward the cannabinoid receptors. AnuJ does not seem to play a role within the pathway. The annullatin backbone 2-hydroxymethyl-3-pentylphenol is assembled from one acetyl-CoA starter unit and 5 malonyl-CoA elongation units by cooperation of the highly reducing polyketide synthase anuA, the short-chain dehydrogenase anuB and the oxidoreductase anuC, before being hydroxylated at the C-5 alkyl chain by the cytochrome P450 monooxygenase anuE to form (8S)-annullatin E. The prenyltransferase anuH subsequently installs one isoprenyl group at the benzene ring to form (8S)-annullatin J. Enzymatic or nonenzymatic dihydro-benzofuran ring formation between the prenyl and the phenolic hydroxyl groups in (8S)-annullatin J results in two diastereomers (2S,9S)-annullatin H and compound 12. The intermediate (2S,9S)-annullatin H is then converted to (2S,9S)-annullatin D by the FAD-linked oxidoreductase anuG-catalyzed five-member lactone ring formation. The isomer 12 acts as a substrate for the short-chain dehydrogenase anuF and is oxidized to (2R)-annullatin F, which is subsequently acetylated by an acetyltransferase leading to (2R)-annullatin G formation. The remaining enzymes identified within the cluster, anuD, anuI and anuJ, seem not to be involved in annullatin biosynthesis. This Penicillium roqueforti (strain FM164) protein is FAD-dependent monooxygenase anuJ.